The sequence spans 124 residues: Small t antigen (124 aa).

Residues 10-96 (ELRGLLGTPD…LPKIFWLRFQ (87 aa)) enclose the J domain.

The protein localises to the host cytoplasm. Its subcellular location is the host nucleus. In terms of biological role, promotes efficient viral genome replication by accelerating both G1 and S phase progression of the cell cycle. The protein is Small t antigen of Bos taurus (Bovine).